A 233-amino-acid polypeptide reads, in one-letter code: MGQKVHPNGIRLGIVKPWNSTWYANTKEFADNLDSDFKVRKYLTKELEKASVSRIVIERPAKSIRVTIHTARPGIVIGKKGEDVEKLRKVVADIAGVPAQINIAEVRKPELDAKLVADSITSQLERRVMFRRAMKRAVQNAMRLGAKGIKVEVSGRLGGAEIARTEWYREGRVPLHTLRADIDYNTSEAHTTYGVIGVKVWIFKGEILGGMAAVEQPEKPSAQPKKQQRKGRK.

Positions Val39–Arg107 constitute a KH type-2 domain. The tract at residues Val214–Lys233 is disordered.

Belongs to the universal ribosomal protein uS3 family. In terms of assembly, part of the 30S ribosomal subunit. Forms a tight complex with proteins S10 and S14.

Functionally, binds the lower part of the 30S subunit head. Binds mRNA in the 70S ribosome, positioning it for translation. The polypeptide is Small ribosomal subunit protein uS3 (Pectobacterium atrosepticum (strain SCRI 1043 / ATCC BAA-672) (Erwinia carotovora subsp. atroseptica)).